A 164-amino-acid polypeptide reads, in one-letter code: Cytochrome c-type biogenesis protein CcmE (164 aa).

Residues 1–8 are Cytoplasmic-facing; sequence MNPRRKSR. The chain crosses the membrane as a helical; Signal-anchor for type II membrane protein span at residues 9 to 29; the sequence is LYLAVVVLIGIGLTTTLVLYA. Topologically, residues 30 to 164 are periplasmic; that stretch reads LRSNIDLFYT…NSTAAQGNAS (135 aa). The heme site is built by His-130 and Tyr-134. A compositionally biased stretch (basic and acidic residues) spans 131-150; sequence DEKYTPPEVKEAMKENHTRP. A disordered region spans residues 131-164; it reads DEKYTPPEVKEAMKENHTRPAEAYNSTAAQGNAS. A compositionally biased stretch (polar residues) spans 154 to 164; sequence YNSTAAQGNAS.

This sequence belongs to the CcmE/CycJ family.

The protein localises to the cell inner membrane. Its function is as follows. Heme chaperone required for the biogenesis of c-type cytochromes. Transiently binds heme delivered by CcmC and transfers the heme to apo-cytochromes in a process facilitated by CcmF and CcmH. The chain is Cytochrome c-type biogenesis protein CcmE from Yersinia enterocolitica serotype O:8 / biotype 1B (strain NCTC 13174 / 8081).